The primary structure comprises 644 residues: Protein cueball (644 aa).

Residues 1 to 26 form the signal peptide; sequence MIRIRFGMDVLLVLLLATCLLSPTHG. At 27–531 the chain is on the extracellular side; it reads TPLEWDFAVT…VCLTPTVWTS (505 aa). N-linked (GlcNAc...) asparagine glycans are attached at residues asparagine 82 and asparagine 108. LDL-receptor class B repeat units follow at residues 121–166, 167–211, and 212–257; these read TNLF…DVCR, RKLY…DQLS, and DRLF…TNDA. N-linked (GlcNAc...) asparagine glycans are attached at residues asparagine 175 and asparagine 190. Residue asparagine 313 is glycosylated (N-linked (GlcNAc...) asparagine). EGF-like domains are found at residues 398 to 430 and 433 to 471; these read EIRE…FTGE and EVSV…ARCE. 5 disulfide bridges follow: cysteine 402/cysteine 411, cysteine 406/cysteine 421, cysteine 437/cysteine 447, cysteine 441/cysteine 459, and cysteine 461/cysteine 470. Asparagine 473 and asparagine 508 each carry an N-linked (GlcNAc...) asparagine glycan. The chain crosses the membrane as a helical span at residues 532 to 552; the sequence is SVIIILVVGIVSSLLLVAVIV. The Cytoplasmic portion of the chain corresponds to 553-644; it reads HGIRRLYKPK…LIHNMEDDLY (92 aa).

The protein belongs to the cueball family.

It localises to the cell membrane. In terms of biological role, has a role in spermatogenesis and oogenesis. The chain is Protein cueball from Drosophila yakuba (Fruit fly).